The following is a 379-amino-acid chain: tRNA-specific 2-thiouridylase MnmA (379 aa).

ATP is bound by residues 9-16 and M35; that span reads AMSGGVDS. The interval 94-96 is interaction with target base in tRNA; it reads NPD. The active-site Nucleophile is the C99. C99 and C195 form a disulfide bridge. G123 contacts ATP. Positions 145–147 are interaction with tRNA; the sequence is KDQ. The active-site Cysteine persulfide intermediate is the C195. An interaction with tRNA region spans residues 307-308; it reads RY.

This sequence belongs to the MnmA/TRMU family.

The protein localises to the cytoplasm. The catalysed reaction is S-sulfanyl-L-cysteinyl-[protein] + uridine(34) in tRNA + AH2 + ATP = 2-thiouridine(34) in tRNA + L-cysteinyl-[protein] + A + AMP + diphosphate + H(+). Its function is as follows. Catalyzes the 2-thiolation of uridine at the wobble position (U34) of tRNA, leading to the formation of s(2)U34. This Xylella fastidiosa (strain M23) protein is tRNA-specific 2-thiouridylase MnmA.